We begin with the raw amino-acid sequence, 295 residues long: Origin of replication complex subunit 6 (295 aa).

Positions Pro212–Asn295 are disordered. The span at Asp220 to Asp236 shows a compositional bias: acidic residues. The span at Trp254–Gln263 shows a compositional bias: polar residues.

It belongs to the ORC6 family. Component of the origin recognition complex (ORC) composed of at least ORC1, ORC2, ORC3, ORC4, ORC5 and ORC6. ORC is regulated in a cell-cycle and development dependent manner. It is sequentially assembled at the exit from anaphase of mitosis and disassembled as cells enter S phase.

It is found in the nucleus. Component of the origin recognition complex (ORC) that binds origins of replication. DNA-binding is ATP-dependent. The specific DNA sequences that define origins of replication have not been identified yet. ORC is required to assemble the pre-replication complex necessary to initiate DNA replication. This is Origin of replication complex subunit 6 from Oryza sativa subsp. japonica (Rice).